Reading from the N-terminus, the 464-residue chain is Trigger factor (464 aa).

Residues 169–256 (GDVAIVDYRG…MKELKAKELP (88 aa)) form the PPIase FKBP-type domain.

The protein belongs to the FKBP-type PPIase family. Tig subfamily.

The protein localises to the cytoplasm. The catalysed reaction is [protein]-peptidylproline (omega=180) = [protein]-peptidylproline (omega=0). Its function is as follows. Involved in protein export. Acts as a chaperone by maintaining the newly synthesized protein in an open conformation. Functions as a peptidyl-prolyl cis-trans isomerase. The protein is Trigger factor of Microcystis aeruginosa (strain NIES-843 / IAM M-2473).